A 788-amino-acid chain; its full sequence is Protein translocase subunit SecA 2 (788 aa).

ATP contacts are provided by residues Q86, 104-108 (GEGKT), and D493.

This sequence belongs to the SecA family. As to quaternary structure, monomer and homodimer. Part of the essential Sec protein translocation apparatus which comprises SecA, SecYEG and auxiliary proteins SecDF. Other proteins may also be involved.

The protein resides in the cell membrane. The protein localises to the cytoplasm. The enzyme catalyses ATP + H2O + cellular proteinSide 1 = ADP + phosphate + cellular proteinSide 2.. Part of the Sec protein translocase complex. Interacts with the SecYEG preprotein conducting channel. Has a central role in coupling the hydrolysis of ATP to the transfer of proteins into and across the cell membrane, serving as an ATP-driven molecular motor driving the stepwise translocation of polypeptide chains across the membrane. This chain is Protein translocase subunit SecA 2, found in Geobacillus thermodenitrificans (strain NG80-2).